A 372-amino-acid chain; its full sequence is BTB/POZ and TAZ domain-containing protein 4 (372 aa).

The disordered stretch occupies residues 14 to 37; the sequence is SADSSSVPIPPPLPSKSDGLKKKL. The BTB domain maps to 60–128; it reads ADVVIYTDNG…LYSSCYEKEE (69 aa). The TAZ-type zinc finger occupies 238-330; the sequence is RIYSQLYEAM…SDQCRVPLCR (93 aa). The segment at 341–364 is caM-binding; the sequence is KKDESRWKLLVKNVLGSKKIGGSP.

In terms of assembly, interacts with GTE11/BET10 through the BTB domain. In terms of tissue distribution, preferentially expressed in leaves, stems and flowers.

Its subcellular location is the cytoplasm. It functions in the pathway protein modification; protein ubiquitination. Its function is as follows. May act as a substrate-specific adapter of an E3 ubiquitin-protein ligase complex (CUL3-RBX1-BTB) which mediates the ubiquitination and subsequent proteasomal degradation of target proteins. In Arabidopsis thaliana (Mouse-ear cress), this protein is BTB/POZ and TAZ domain-containing protein 4 (BT4).